A 207-amino-acid chain; its full sequence is Guanylate kinase (207 aa).

A Guanylate kinase-like domain is found at 6-185 (GLLIVLSGPS…AKQRIQSIVE (180 aa)). 13 to 20 (GPSGVGKG) serves as a coordination point for ATP.

The protein belongs to the guanylate kinase family.

The protein resides in the cytoplasm. The enzyme catalyses GMP + ATP = GDP + ADP. Its function is as follows. Essential for recycling GMP and indirectly, cGMP. The chain is Guanylate kinase from Staphylococcus saprophyticus subsp. saprophyticus (strain ATCC 15305 / DSM 20229 / NCIMB 8711 / NCTC 7292 / S-41).